The sequence spans 1935 residues: Myosin-7 (1935 aa).

In terms of domain architecture, Myosin N-terminal SH3-like spans 32–81 (DLKKDVFVPDDKEEFVKATILSREGGKVTAETEHGKTVTVKEDQVLQQNP). A Myosin motor domain is found at 85–778 (DKIEDMAMLT…LLGLLEEMRD (694 aa)). Lys129 is modified (N6,N6,N6-trimethyllysine). 178–185 (GESGAGKT) serves as a coordination point for ATP. Thr378 bears the Phosphothreonine mark. Actin-binding regions lie at residues 655 to 677 (LNKLMTNLRSTHPHFVRCIIPNE) and 757 to 771 (KFGHTKVFFKAGLLG). The IQ domain maps to 781–810 (LSRIITRIQAQSRGVLSRMEFKKLLERRDS). The stretch at 839–1935 (LLKSAETEKE…DIGTKGLNEE (1097 aa)) forms a coiled coil. Phosphoserine is present on residues Ser1137 and Ser1269. Position 1282 is a phosphothreonine (Thr1282). Position 1308 is a phosphotyrosine (Tyr1308). Thr1309 carries the phosphothreonine modification. Ser1510 carries the phosphoserine modification. Thr1513 bears the Phosphothreonine mark. The segment at 1907–1935 (EERADIAESQVNKLRAKSRDIGTKGLNEE) is disordered. The segment covering 1923–1935 (KSRDIGTKGLNEE) has biased composition (basic and acidic residues).

This sequence belongs to the TRAFAC class myosin-kinesin ATPase superfamily. Myosin family. In terms of assembly, muscle myosin is a hexameric protein that consists of 2 heavy chain subunits (MHC), 2 alkali light chain subunits (MLC) and 2 regulatory light chain subunits (MLC-2). Interacts with ECPAS. Interacts (via C-terminus) with LRRC39.

The protein localises to the cytoplasm. The protein resides in the myofibril. Its subcellular location is the sarcomere. In terms of biological role, myosins are actin-based motor molecules with ATPase activity essential for muscle contraction. Forms regular bipolar thick filaments that, together with actin thin filaments, constitute the fundamental contractile unit of skeletal and cardiac muscle. The polypeptide is Myosin-7 (MYH7) (Bos taurus (Bovine)).